A 125-amino-acid chain; its full sequence is MARLAGVDIPREKRLEIALTYIYGVGKTRAHETLAATGISADVRVKDLTDAQLVELRDYIEGNYKVEGDLRREVAADIRRKVEIGSYEGLRHRKGLPVRGQRTKTNARTRKGPKRTVAGKKKAGR.

Positions 93-125 are disordered; sequence RKGLPVRGQRTKTNARTRKGPKRTVAGKKKAGR.

The protein belongs to the universal ribosomal protein uS13 family. Part of the 30S ribosomal subunit. Forms a loose heterodimer with protein S19. Forms two bridges to the 50S subunit in the 70S ribosome.

Located at the top of the head of the 30S subunit, it contacts several helices of the 16S rRNA. In the 70S ribosome it contacts the 23S rRNA (bridge B1a) and protein L5 of the 50S subunit (bridge B1b), connecting the 2 subunits; these bridges are implicated in subunit movement. Contacts the tRNAs in the A and P-sites. This is Small ribosomal subunit protein uS13 from Arthrobacter sp. (strain FB24).